Reading from the N-terminus, the 251-residue chain is tRNA pseudouridine synthase A (251 aa).

Asp52 (nucleophile) is an active-site residue. Residue Tyr113 coordinates substrate.

This sequence belongs to the tRNA pseudouridine synthase TruA family. In terms of assembly, homodimer.

The catalysed reaction is uridine(38/39/40) in tRNA = pseudouridine(38/39/40) in tRNA. Functionally, formation of pseudouridine at positions 38, 39 and 40 in the anticodon stem and loop of transfer RNAs. The chain is tRNA pseudouridine synthase A from Brucella anthropi (strain ATCC 49188 / DSM 6882 / CCUG 24695 / JCM 21032 / LMG 3331 / NBRC 15819 / NCTC 12168 / Alc 37) (Ochrobactrum anthropi).